A 211-amino-acid chain; its full sequence is Urease accessory protein UreE (211 aa).

The disordered stretch occupies residues E170–D211. A compositionally biased stretch (basic and acidic residues) spans H176–H196.

Belongs to the UreE family.

The protein resides in the cytoplasm. Functionally, involved in urease metallocenter assembly. Binds nickel. Probably functions as a nickel donor during metallocenter assembly. The polypeptide is Urease accessory protein UreE (Ralstonia nicotianae (strain ATCC BAA-1114 / GMI1000) (Ralstonia solanacearum)).